The following is a 596-amino-acid chain: Aspartate--tRNA(Asp/Asn) ligase (596 aa).

Residue E175 coordinates L-aspartate. Residues 199–202 are aspartate; the sequence is QQYK. 2 residues coordinate L-aspartate: R221 and H454. 221-223 is a binding site for ATP; it reads RDE. E488 contributes to the ATP binding site. R495 is a binding site for L-aspartate. ATP is bound at residue 540–543; the sequence is GVDR.

It belongs to the class-II aminoacyl-tRNA synthetase family. Type 1 subfamily. In terms of assembly, homodimer.

It localises to the cytoplasm. The catalysed reaction is tRNA(Asx) + L-aspartate + ATP = L-aspartyl-tRNA(Asx) + AMP + diphosphate. Functionally, aspartyl-tRNA synthetase with relaxed tRNA specificity since it is able to aspartylate not only its cognate tRNA(Asp) but also tRNA(Asn). Reaction proceeds in two steps: L-aspartate is first activated by ATP to form Asp-AMP and then transferred to the acceptor end of tRNA(Asp/Asn). The protein is Aspartate--tRNA(Asp/Asn) ligase of Bartonella bacilliformis (strain ATCC 35685 / KC583 / Herrer 020/F12,63).